The chain runs to 590 residues: UvrABC system protein C (590 aa).

The GIY-YIG domain maps to 14–91 (DQPGCYLMKD…IKKYDPKYNV (78 aa)). Residues 196–231 (QQIKKELTEKMQEAAEQLEFERAKELRDQIAYIDST) form the UVR domain.

The protein belongs to the UvrC family. In terms of assembly, interacts with UvrB in an incision complex.

Its subcellular location is the cytoplasm. Functionally, the UvrABC repair system catalyzes the recognition and processing of DNA lesions. UvrC both incises the 5' and 3' sides of the lesion. The N-terminal half is responsible for the 3' incision and the C-terminal half is responsible for the 5' incision. The sequence is that of UvrABC system protein C from Bacillus pumilus (strain SAFR-032).